The primary structure comprises 426 residues: Glutamate-1-semialdehyde 2,1-aminomutase (426 aa).

K265 is subject to N6-(pyridoxal phosphate)lysine.

The protein belongs to the class-III pyridoxal-phosphate-dependent aminotransferase family. HemL subfamily. In terms of assembly, homodimer. Requires pyridoxal 5'-phosphate as cofactor.

The protein resides in the cytoplasm. It carries out the reaction (S)-4-amino-5-oxopentanoate = 5-aminolevulinate. It participates in porphyrin-containing compound metabolism; protoporphyrin-IX biosynthesis; 5-aminolevulinate from L-glutamyl-tRNA(Glu): step 2/2. The polypeptide is Glutamate-1-semialdehyde 2,1-aminomutase (Escherichia coli O157:H7).